The chain runs to 301 residues: Ribosomal protein L11 methyltransferase (301 aa).

4 residues coordinate S-adenosyl-L-methionine: threonine 130, glycine 151, aspartate 172, and asparagine 239.

The protein belongs to the methyltransferase superfamily. PrmA family.

Its subcellular location is the cytoplasm. The catalysed reaction is L-lysyl-[protein] + 3 S-adenosyl-L-methionine = N(6),N(6),N(6)-trimethyl-L-lysyl-[protein] + 3 S-adenosyl-L-homocysteine + 3 H(+). Functionally, methylates ribosomal protein L11. This is Ribosomal protein L11 methyltransferase from Campylobacter hominis (strain ATCC BAA-381 / DSM 21671 / CCUG 45161 / LMG 19568 / NCTC 13146 / CH001A).